We begin with the raw amino-acid sequence, 154 residues long: NAD(P)H-quinone oxidoreductase subunit N (154 aa).

Belongs to the complex I NdhN subunit family. As to quaternary structure, NDH-1 can be composed of about 15 different subunits; different subcomplexes with different compositions have been identified which probably have different functions.

It localises to the cellular thylakoid membrane. It catalyses the reaction a plastoquinone + NADH + (n+1) H(+)(in) = a plastoquinol + NAD(+) + n H(+)(out). The enzyme catalyses a plastoquinone + NADPH + (n+1) H(+)(in) = a plastoquinol + NADP(+) + n H(+)(out). In terms of biological role, NDH-1 shuttles electrons from an unknown electron donor, via FMN and iron-sulfur (Fe-S) centers, to quinones in the respiratory and/or the photosynthetic chain. The immediate electron acceptor for the enzyme in this species is believed to be plastoquinone. Couples the redox reaction to proton translocation, and thus conserves the redox energy in a proton gradient. Cyanobacterial NDH-1 also plays a role in inorganic carbon-concentration. This Prochlorococcus marinus (strain NATL2A) protein is NAD(P)H-quinone oxidoreductase subunit N.